The primary structure comprises 159 residues: 4-deoxy-4-sulfo-D-erythrose isomerase (159 aa).

The active-site Proton acceptor is the Cys-66.

It belongs to the LacAB/RpiB family.

The enzyme catalyses 4-deoxy-4-sulfo-D-erythrose = 4-deoxy-4-sulfo-D-erythrulose. Its function is as follows. Part of the sulfo-TK pathway, a D-sulfoquinovose degradation pathway that produces 2-hydroxyethane-1-sulfonate (isethionate). Catalyzes the isomerization of 4-deoxy-4-sulfo-D-erythrose (SE) to 4-deoxy-4-sulfo-D-erythrulose (SEu). The sequence is that of 4-deoxy-4-sulfo-D-erythrose isomerase from Clostridium sp. (strain MSTE9).